We begin with the raw amino-acid sequence, 111 residues long: Parvalbumin alpha (111 aa).

T1 bears the N-acetylthreonine; in form C2 mark. 2 consecutive EF-hand domains span residues 40–75 (KPDD…FAAG) and 79–111 (LTAN…VKAA). Residues D53, D55, S57, Y59, E61, E64, D92, D94, D96, K98, and E103 each coordinate Ca(2+).

This sequence belongs to the parvalbumin family. In terms of processing, acetylation of Thr-1 converts C1 to C2.

Its function is as follows. In muscle, parvalbumin is thought to be involved in relaxation after contraction. It binds two calcium ions. This Latimeria chalumnae (Coelacanth) protein is Parvalbumin alpha.